Consider the following 245-residue polypeptide: MASVILFPAIDLKDGLAVRLEQGDMARATVFNRDPAAQAAEFETLGFRYLHLVDLDGAFAGKPVNAAAVERILETVSIPVQLGGGIRDLKTVEAWLEKGVTRVILGTAAVRDPDFVKQAAKAHPGRIVVGLDARDGRVAVEGWAETSDIAAVDIAKRFEDAGVTAIIYTDIARDGLLKGLNLDATVALAEAVNLPVIASGGLASLADIEALLTPRAKKLEGAITGRALYDGRLDAREALALVAGR.

Residue Asp11 is the Proton acceptor of the active site. Asp132 serves as the catalytic Proton donor.

Belongs to the HisA/HisF family.

It localises to the cytoplasm. The catalysed reaction is 1-(5-phospho-beta-D-ribosyl)-5-[(5-phospho-beta-D-ribosylamino)methylideneamino]imidazole-4-carboxamide = 5-[(5-phospho-1-deoxy-D-ribulos-1-ylimino)methylamino]-1-(5-phospho-beta-D-ribosyl)imidazole-4-carboxamide. Its pathway is amino-acid biosynthesis; L-histidine biosynthesis; L-histidine from 5-phospho-alpha-D-ribose 1-diphosphate: step 4/9. This Xanthobacter autotrophicus (strain ATCC BAA-1158 / Py2) protein is 1-(5-phosphoribosyl)-5-[(5-phosphoribosylamino)methylideneamino] imidazole-4-carboxamide isomerase.